A 306-amino-acid polypeptide reads, in one-letter code: Porphobilinogen deaminase (306 aa).

An S-(dipyrrolylmethanemethyl)cysteine modification is found at Cys-240.

Belongs to the HMBS family. As to quaternary structure, monomer. Requires dipyrromethane as cofactor.

The catalysed reaction is 4 porphobilinogen + H2O = hydroxymethylbilane + 4 NH4(+). It participates in porphyrin-containing compound metabolism; protoporphyrin-IX biosynthesis; coproporphyrinogen-III from 5-aminolevulinate: step 2/4. In terms of biological role, tetrapolymerization of the monopyrrole PBG into the hydroxymethylbilane pre-uroporphyrinogen in several discrete steps. This is Porphobilinogen deaminase from Thiobacillus denitrificans (strain ATCC 25259 / T1).